The sequence spans 456 residues: Phosphomethylpyrimidine synthase (456 aa).

Substrate contacts are provided by residues Asn80, Met109, Tyr139, His175, 195-197 (SRG), 236-239 (DSLR), and Glu275. Residue His279 coordinates Zn(2+). Substrate is bound at residue Tyr302. Position 343 (His343) interacts with Zn(2+). 3 residues coordinate [4Fe-4S] cluster: Cys423, Cys426, and Cys431.

This sequence belongs to the ThiC family. [4Fe-4S] cluster serves as cofactor.

It carries out the reaction 5-amino-1-(5-phospho-beta-D-ribosyl)imidazole + S-adenosyl-L-methionine = 4-amino-2-methyl-5-(phosphooxymethyl)pyrimidine + CO + 5'-deoxyadenosine + formate + L-methionine + 3 H(+). The protein operates within cofactor biosynthesis; thiamine diphosphate biosynthesis. Functionally, catalyzes the synthesis of the hydroxymethylpyrimidine phosphate (HMP-P) moiety of thiamine from aminoimidazole ribotide (AIR) in a radical S-adenosyl-L-methionine (SAM)-dependent reaction. This Prochlorococcus marinus (strain MIT 9312) protein is Phosphomethylpyrimidine synthase.